Consider the following 102-residue polypeptide: MYAIVEIGGKQYKVEKDHFIYVYRLEGAEGSAVTFDNVLLLADNNQYQVGAPSVAGASVSGKILEHLKDDKVTAFKKKRRKGFRKTVGFRQSLTKVLITSLN.

It belongs to the bacterial ribosomal protein bL21 family. As to quaternary structure, part of the 50S ribosomal subunit. Contacts protein L20.

Functionally, this protein binds to 23S rRNA in the presence of protein L20. In Cytophaga hutchinsonii (strain ATCC 33406 / DSM 1761 / CIP 103989 / NBRC 15051 / NCIMB 9469 / D465), this protein is Large ribosomal subunit protein bL21.